Reading from the N-terminus, the 316-residue chain is ATP synthase gamma chain (316 aa).

The protein belongs to the ATPase gamma chain family. In terms of assembly, F-type ATPases have 2 components, CF(1) - the catalytic core - and CF(0) - the membrane proton channel. CF(1) has five subunits: alpha(3), beta(3), gamma(1), delta(1), epsilon(1). CF(0) has three main subunits: a, b and c.

It localises to the cellular thylakoid membrane. Produces ATP from ADP in the presence of a proton gradient across the membrane. The gamma chain is believed to be important in regulating ATPase activity and the flow of protons through the CF(0) complex. The protein is ATP synthase gamma chain of Prochlorococcus marinus (strain MIT 9515).